The sequence spans 300 residues: Protoheme IX farnesyltransferase (300 aa).

The next 9 helical transmembrane spans lie at 24–44 (VTQLAVFCAVIGMFLATPGMV), 46–66 (WHVLIGGTVGIWLLAGAAFAI), 94–114 (PQILLFSAVLGSVGAWTLYTF), 118–138 (LTMWLTIATFVGYAVIYTLLL), 146–166 (IVIGGASGAMPPALGWAAVTG), 172–192 (AWILVLIIFVWTPPHFWVLAL), 217–237 (LHILLYTVILFAVTLMPFISG), 239–259 (SGAVYLTSAVLLGAVFLAYAW), and 278–298 (IVYLSLLFAALLVDHYARPLL).

Belongs to the UbiA prenyltransferase family. Protoheme IX farnesyltransferase subfamily.

It is found in the cell inner membrane. It catalyses the reaction heme b + (2E,6E)-farnesyl diphosphate + H2O = Fe(II)-heme o + diphosphate. Its pathway is porphyrin-containing compound metabolism; heme O biosynthesis; heme O from protoheme: step 1/1. In terms of biological role, converts heme B (protoheme IX) to heme O by substitution of the vinyl group on carbon 2 of heme B porphyrin ring with a hydroxyethyl farnesyl side group. This is Protoheme IX farnesyltransferase from Burkholderia cenocepacia (strain HI2424).